The primary structure comprises 268 residues: Microtubule-associated protein RP/EB family member 1 (268 aa).

Alanine 2 is subject to N-acetylalanine. The 103-residue stretch at 14–116 folds into the Calponin-homology (CH) domain; it reads NLSRHDMLAW…FVQWFKKFFD (103 aa). Lysine 66 carries the post-translational modification N6-crotonyllysine. Tyrosine 124 is modified (phosphotyrosine). Residues 124 to 268 form an interaction with MTUS2/TIP150 region; the sequence is YDPVAARQGQ…GGPQEEQEEY (145 aa). Residues 147-160 are compositionally biased toward low complexity; it reads NKPKKPLSSSSAAP. The tract at residues 147-184 is disordered; the sequence is NKPKKPLSSSSAAPQRPITTHRTTATPKAGPGVVRKNP. Phosphoserine is present on serine 155. Residues 163–172 are compositionally biased toward polar residues; it reads PITTHRTTAT. One can recognise an EB1 C-terminal domain in the interval 185–255; sequence GVGNGDDEAA…LYATDEGFVI (71 aa). Residues 185–268 form an interaction with CDK5RAP2 region; that stretch reads GVGNGDDEAA…GGPQEEQEEY (84 aa). An interaction with APC region spans residues 206 to 211; that stretch reads TVEDLE. Residues 208–268 form a DCTN1-binding region; the sequence is EDLEKERDFY…GGPQEEQEEY (61 aa). Lysine 220 carries the N6-acetyllysine modification. The tract at residues 220 to 242 is APC-binding; that stretch reads KLRNIELICQENEGENNPVLQRI. Residues 232 to 255 form an interaction with SKA1 region; the sequence is EGENNPVLQRIVDILYATDEGFVI.

This sequence belongs to the MAPRE family. In terms of assembly, homodimer. Heterodimer with MAPRE3. Interacts with DCTN1, DCTN2, TERF1 and dynein intermediate chain. Interaction with DIAPH1 and DIAPH2. Interacts (via C-terminal residues 206-211) with APC (via C-terminal residues 2674-2845); the interaction inhibits association with and bundling of F-actin. Interacts with CLASP2, DST, KIF2C and STIM1; probably required for their targeting to the growing microtubule plus ends. Interacts with MTUS2; interaction is direct and probably targets MTUS2 to microtubules. Interacts (via C-terminus) with SKA1 (via SXIP motif); the interaction is direct and stabilizes the kinetochore-microtubule attachment of the SKA1 complex. Interacts with APC2. Interacts with CLASP1. Interacts with CDK5RAP2. Interacts with MACF1. Interacts with RABL2/RABL2A; binds preferentially to GTP-bound RABL2. Interacts with KCNAB2. Interacts (via C-terminus) with CLIP1. Interacts with SLAIN2 and SLAIN1. Interacts with KIF18B; this interaction is required for efficient accumulation of KIF18B at microtubule plus ends. Interacts with MISP. Interacts with KNSTRN. Interacts with NCKAP5L. Interacts with CAMSAP2. Interacts with PDE4DIP isoform 13/MMG8/SMYLE; this interaction is required for its recruitment to the Golgi apparatus. Forms a pericentrosomal complex with AKAP9, CDK5RAP2 and PDE4DIP isoform 13/MMG8/SMYLE; within this complex, MAPRE1 binding to CDK5RAP2 may be mediated by PDE4DIP. Interacts with AKNA. Interacts with GAS2L1, GAS2L2, and GAS2L3. Acetylation at Lys-220 by KAT2B/PCAF promotes dynamic kinetochore-microtubule interactions in early mitosis. In terms of processing, crotonylated by KAT5 during mitosis, promoting astral microtubule plasticity and dynamic connection between astral microtubules and the cortex during mitotic chromosome segregation, thereby ensuring accurate spindle positioning in mitosis. Decrotonylated by HDAC3.

It is found in the cytoplasm. Its subcellular location is the cytoskeleton. The protein resides in the microtubule organizing center. It localises to the centrosome. The protein localises to the golgi apparatus. It is found in the spindle. Its subcellular location is the spindle pole. Plus-end tracking protein (+TIP) that binds to the plus-end of microtubules and regulates the dynamics of the microtubule cytoskeleton. Recruits other +TIP proteins to microtubules by binding to a conserved Ser-X-Leu-Pro (SXLP) motif in their polypeptide chains. Promotes cytoplasmic microtubule nucleation and elongation. Involved in mitotic spindle positioning by stabilizing microtubules and promoting dynamic connection between astral microtubules and the cortex during mitotic chromosome segregation. Assists chromosome alignment in metaphase by recruiting the SKA complex to the spindle and stabilizing its interactions with microtubule bundles (K-fibers). Also acts as a regulator of minus-end microtubule organization: interacts with the complex formed by AKAP9 and PDE4DIP, leading to recruit CAMSAP2 to the Golgi apparatus, thereby tethering non-centrosomal minus-end microtubules to the Golgi, an important step for polarized cell movement. Promotes elongation of CAMSAP2-decorated microtubule stretches on the minus-end of microtubules. Acts as a regulator of autophagosome transport via interaction with CAMSAP2. Functions downstream of Rho GTPases and DIAPH1 in stable microtubule formation. May play a role in cell migration. The polypeptide is Microtubule-associated protein RP/EB family member 1 (MAPRE1) (Bos taurus (Bovine)).